We begin with the raw amino-acid sequence, 222 residues long: Eukaryotic translation initiation factor 3 subunit K (222 aa).

In terms of domain architecture, PCI spans 46-208 (YDLEANLAVL…KIKTKNITEK (163 aa)).

The protein belongs to the eIF-3 subunit K family. As to quaternary structure, component of the eukaryotic translation initiation factor 3 (eIF-3) complex. The eIF-3 complex interacts with pix.

It is found in the cytoplasm. Functionally, component of the eukaryotic translation initiation factor 3 (eIF-3) complex, which is involved in protein synthesis of a specialized repertoire of mRNAs and, together with other initiation factors, stimulates binding of mRNA and methionyl-tRNAi to the 40S ribosome. The eIF-3 complex specifically targets and initiates translation of a subset of mRNAs involved in cell proliferation. In Drosophila yakuba (Fruit fly), this protein is Eukaryotic translation initiation factor 3 subunit K.